The following is a 345-amino-acid chain: Uroporphyrinogen decarboxylase (345 aa).

Residues 27 to 31 (RQAGR), Phe-46, Asp-76, Tyr-152, Ser-207, and His-320 each bind substrate.

It belongs to the uroporphyrinogen decarboxylase family. In terms of assembly, homodimer.

The protein localises to the cytoplasm. The enzyme catalyses uroporphyrinogen III + 4 H(+) = coproporphyrinogen III + 4 CO2. The protein operates within porphyrin-containing compound metabolism; protoporphyrin-IX biosynthesis; coproporphyrinogen-III from 5-aminolevulinate: step 4/4. Functionally, catalyzes the decarboxylation of four acetate groups of uroporphyrinogen-III to yield coproporphyrinogen-III. In Geobacillus kaustophilus (strain HTA426), this protein is Uroporphyrinogen decarboxylase.